The chain runs to 397 residues: S-adenosylmethionine synthase (397 aa).

ATP is bound at residue H16. D18 lines the Mg(2+) pocket. K(+) is bound at residue E44. L-methionine contacts are provided by E57 and Q100. A flexible loop region spans residues 100–110 (QSPDIAQGVNE). Residues 175–177 (DAK), 242–243 (RF), D251, 257–258 (RK), A274, and K278 contribute to the ATP site. An L-methionine-binding site is contributed by D251. Residue K282 coordinates L-methionine.

It belongs to the AdoMet synthase family. In terms of assembly, homotetramer; dimer of dimers. The cofactor is Mg(2+). Requires K(+) as cofactor.

It is found in the cytoplasm. It catalyses the reaction L-methionine + ATP + H2O = S-adenosyl-L-methionine + phosphate + diphosphate. The protein operates within amino-acid biosynthesis; S-adenosyl-L-methionine biosynthesis; S-adenosyl-L-methionine from L-methionine: step 1/1. Functionally, catalyzes the formation of S-adenosylmethionine (AdoMet) from methionine and ATP. The overall synthetic reaction is composed of two sequential steps, AdoMet formation and the subsequent tripolyphosphate hydrolysis which occurs prior to release of AdoMet from the enzyme. The chain is S-adenosylmethionine synthase from Streptococcus thermophilus (strain CNRZ 1066).